The chain runs to 692 residues: Potassium-transporting ATPase ATP-binding subunit (692 aa).

4 helical membrane passes run 35 to 55 (VMFI…KDLY), 64 to 84 (LQIS…EAIA), 213 to 233 (IALT…VMSL), and 254 to 274 (ILIS…LSAI). The active-site 4-aspartylphosphate intermediate is D307. Residues D344, E348, 377-384 (FSASTKMS), and K400 each bind ATP. The Mg(2+) site is built by D523 and D527. 3 helical membrane-spanning segments follow: residues 592–612 (YFAI…VGPL), 626–646 (AVLS…PLAL), and 672–692 (MVIP…LGII).

The protein belongs to the cation transport ATPase (P-type) (TC 3.A.3) family. Type IA subfamily. In terms of assembly, the system is composed of three essential subunits: KdpA, KdpB and KdpC.

The protein localises to the cell inner membrane. The catalysed reaction is K(+)(out) + ATP + H2O = K(+)(in) + ADP + phosphate + H(+). Functionally, part of the high-affinity ATP-driven potassium transport (or Kdp) system, which catalyzes the hydrolysis of ATP coupled with the electrogenic transport of potassium into the cytoplasm. This subunit is responsible for energy coupling to the transport system and for the release of the potassium ions to the cytoplasm. This is Potassium-transporting ATPase ATP-binding subunit from Leptospira interrogans serogroup Icterohaemorrhagiae serovar Lai (strain 56601).